Reading from the N-terminus, the 506-residue chain is Glycine--tRNA ligase (506 aa).

Residues R99 and E189 each coordinate substrate. ATP is bound by residues 221–223 (RNE), 231–236 (FRVREL), 306–307 (EI), and 365–368 (GVDR). Substrate is bound at residue 236 to 240 (LEQME). 361–365 (EPSAG) is a binding site for substrate.

This sequence belongs to the class-II aminoacyl-tRNA synthetase family. Homodimer.

The protein resides in the cytoplasm. The enzyme catalyses tRNA(Gly) + glycine + ATP = glycyl-tRNA(Gly) + AMP + diphosphate. Functionally, catalyzes the attachment of glycine to tRNA(Gly). This is Glycine--tRNA ligase from Deinococcus radiodurans (strain ATCC 13939 / DSM 20539 / JCM 16871 / CCUG 27074 / LMG 4051 / NBRC 15346 / NCIMB 9279 / VKM B-1422 / R1).